Here is a 196-residue protein sequence, read N- to C-terminus: Small ribosomal subunit protein uS4c (196 aa).

The disordered stretch occupies residues 20–39 (GLTRKTPKSGSNLKKKFHSG). The region spanning 89-152 (MRLDNILFRL…RSKCLVQNSI (64 aa)) is the S4 RNA-binding domain.

This sequence belongs to the universal ribosomal protein uS4 family. As to quaternary structure, part of the 30S ribosomal subunit. Contacts protein S5. The interaction surface between S4 and S5 is involved in control of translational fidelity.

The protein localises to the plastid. It localises to the chloroplast. One of the primary rRNA binding proteins, it binds directly to 16S rRNA where it nucleates assembly of the body of the 30S subunit. Its function is as follows. With S5 and S12 plays an important role in translational accuracy. This chain is Small ribosomal subunit protein uS4c (rps4), found in Dendrocalamus giganteus (Giant bamboo).